A 290-amino-acid polypeptide reads, in one-letter code: Membrane protein insertase YidC 1 (290 aa).

An N-terminal signal peptide occupies residues 1 to 19 (MKKKALLPLFLGIMIFLAG). C20 is lipidated: N-palmitoyl cysteine. C20 is lipidated: S-diacylglycerol cysteine. 5 helical membrane passes run 56–76 (FGLA…PFML), 134–154 (MLGC…YFVL), 176–196 (PDIW…VVSS), 211–231 (MVIS…ALGL), and 232–252 (YWSV…IYYS). A disordered region spans residues 270 to 290 (HNPYSKKKGKNTQVVSKKNKK). Residues 280-290 (NTQVVSKKNKK) are compositionally biased toward polar residues.

This sequence belongs to the OXA1/ALB3/YidC family. Type 2 subfamily.

The protein resides in the cell membrane. Functionally, required for the insertion and/or proper folding and/or complex formation of integral membrane proteins into the membrane. Involved in integration of membrane proteins that insert both dependently and independently of the Sec translocase complex, as well as at least some lipoproteins. The sequence is that of Membrane protein insertase YidC 1 from Staphylococcus epidermidis (strain ATCC 12228 / FDA PCI 1200).